We begin with the raw amino-acid sequence, 1379 residues long: ABC multidrug transporter MDR2 (1379 aa).

A helical membrane pass occupies residues 65-85 (IALIVIGTIAGIGAGIPFPLL). Residues 69 to 367 (VIGTIAGIGA…MAPFMHIFAS (299 aa)) enclose the ABC transmembrane type-1 1 domain. Asn-97 is a glycosylation site (N-linked (GlcNAc...) asparagine). Transmembrane regions (helical) follow at residues 119 to 139 (VLQV…HTGC), 193 to 213 (KVGL…VAFL), 215 to 235 (VATI…MAFG), 301 to 321 (IQFG…FWQG), and 336 to 356 (VSVG…FVLS). The ABC transporter 1 domain maps to 403-682 (IELQDVTFNY…DGVYAGMVRL (280 aa)). Residue 438–445 (GTSGSGKS) participates in ATP binding. 2 N-linked (GlcNAc...) asparagine glycosylation sites follow: Asn-552 and Asn-633. Positions 738-758 (YMPEEADSLPTEPENEKEKPK) are disordered. The next 4 helical transmembrane spans lie at 781 to 801 (LGLI…VIFG), 820 to 840 (GMLF…AVIV), 881 to 901 (LLVA…GTTI), and 920 to 942 (VIAW…SGVL). The ABC transmembrane type-1 2 domain maps to 781–1068 (LGLITSIMIG…MFALVPDISK (288 aa)). N-linked (GlcNAc...) asparagine glycosylation occurs at Asn-989. Transmembrane regions (helical) follow at residues 1008 to 1028 (FWLS…YWWG) and 1032 to 1052 (ILAG…LLFS). One can recognise an ABC transporter 2 domain in the interval 1135 to 1374 (VQFRNVHFRY…CESYRANVIH (240 aa)). Residue 1170-1177 (GPSGSGKS) participates in ATP binding.

This sequence belongs to the ABC transporter superfamily. ABCB family. Multidrug resistance exporter (TC 3.A.1.201) subfamily.

The protein localises to the cell membrane. Its function is as follows. Pleiotropic ABC efflux transporter that may be involved in the modulation susceptibility to a wide range of unrelated cytotoxic compounds. This is ABC multidrug transporter MDR2 from Trichophyton interdigitale (strain MR816).